Consider the following 398-residue polypeptide: Bifunctional enzyme IspD/IspF (398 aa).

The 2-C-methyl-D-erythritol 4-phosphate cytidylyltransferase stretch occupies residues 1–234 (MPSSKRTAAI…ARLAAALGDI (234 aa)). The 2-C-methyl-D-erythritol 2,4-cyclodiphosphate synthase stretch occupies residues 235 to 398 (RTGTGYDVHA…LPWNDKGRDT (164 aa)). A divalent metal cation contacts are provided by aspartate 241 and histidine 243. 4-CDP-2-C-methyl-D-erythritol 2-phosphate contacts are provided by residues 241–243 (DVH) and 267–268 (HS). Histidine 275 lines the a divalent metal cation pocket. Residues 289 to 291 (DIG), 365 to 368 (TTSE), phenylalanine 372, and arginine 375 each bind 4-CDP-2-C-methyl-D-erythritol 2-phosphate.

The protein in the N-terminal section; belongs to the IspD/TarI cytidylyltransferase family. IspD subfamily. In the C-terminal section; belongs to the IspF family. The cofactor is a divalent metal cation.

It catalyses the reaction 2-C-methyl-D-erythritol 4-phosphate + CTP + H(+) = 4-CDP-2-C-methyl-D-erythritol + diphosphate. The enzyme catalyses 4-CDP-2-C-methyl-D-erythritol 2-phosphate = 2-C-methyl-D-erythritol 2,4-cyclic diphosphate + CMP. It participates in isoprenoid biosynthesis; isopentenyl diphosphate biosynthesis via DXP pathway; isopentenyl diphosphate from 1-deoxy-D-xylulose 5-phosphate: step 2/6. It functions in the pathway isoprenoid biosynthesis; isopentenyl diphosphate biosynthesis via DXP pathway; isopentenyl diphosphate from 1-deoxy-D-xylulose 5-phosphate: step 4/6. Bifunctional enzyme that catalyzes the formation of 4-diphosphocytidyl-2-C-methyl-D-erythritol from CTP and 2-C-methyl-D-erythritol 4-phosphate (MEP) (IspD), and catalyzes the conversion of 4-diphosphocytidyl-2-C-methyl-D-erythritol 2-phosphate (CDP-ME2P) to 2-C-methyl-D-erythritol 2,4-cyclodiphosphate (ME-CPP) with a corresponding release of cytidine 5-monophosphate (CMP) (IspF). This Nitrobacter winogradskyi (strain ATCC 25391 / DSM 10237 / CIP 104748 / NCIMB 11846 / Nb-255) protein is Bifunctional enzyme IspD/IspF.